The following is a 258-amino-acid chain: Cell division protein ZapD (258 aa).

It belongs to the ZapD family. Interacts with FtsZ.

Its subcellular location is the cytoplasm. Its function is as follows. Cell division factor that enhances FtsZ-ring assembly. Directly interacts with FtsZ and promotes bundling of FtsZ protofilaments, with a reduction in FtsZ GTPase activity. The sequence is that of Cell division protein ZapD from Coxiella burnetii (strain RSA 331 / Henzerling II).